A 146-amino-acid polypeptide reads, in one-letter code: Hemoglobin subunit beta-1 (146 aa).

A Globin domain is found at 2–146 (EWTDQERATI…VVSALGKQYH (145 aa)). Residues His63 and His92 each contribute to the heme b site.

This sequence belongs to the globin family. As to quaternary structure, hb1 is a heterotetramer of two alpha-1 chains and two beta-1 chains. Hb2 is a heterotetramer of two alpha-2 chains and two beta-1 chains. HbC is a heterotetramer of two alpha-1 chains and two beta-2 chains. As to expression, red blood cells.

In terms of biological role, involved in oxygen transport from gills to the various peripheral tissues. This chain is Hemoglobin subunit beta-1, found in Eleginops maclovinus (Patagonian blennie).